We begin with the raw amino-acid sequence, 119 residues long: Large ribosomal subunit protein bL20 (119 aa).

Belongs to the bacterial ribosomal protein bL20 family.

Functionally, binds directly to 23S ribosomal RNA and is necessary for the in vitro assembly process of the 50S ribosomal subunit. It is not involved in the protein synthesizing functions of that subunit. The protein is Large ribosomal subunit protein bL20 of Rhodopseudomonas palustris (strain BisB5).